We begin with the raw amino-acid sequence, 25 residues long: Flagellar filament core protein flaB1 (25 aa).

Belongs to the bacterial flagellin family. In terms of assembly, the flagellum consists of an outer layer composed of two sheath proteins, flaA1 (44 kDa) and flaA2 (35 kDa) around a core that contains three proteins flaB1 (37 kDa), flaB2 (34 kDa) and flaB3 (32 kDa).

The protein resides in the periplasmic flagellum. It localises to the periplasm. Its function is as follows. Component of the core of the flagella. This Brachyspira hyodysenteriae (Treponema hyodysenteriae) protein is Flagellar filament core protein flaB1 (flaB1).